We begin with the raw amino-acid sequence, 852 residues long: Leucine--tRNA ligase (852 aa).

The 'HIGH' region motif lies at 41–51 (PYPSGRIHIGH). The 'KMSKS' region signature appears at 623–627 (KMSKS). Lys-626 provides a ligand contact to ATP.

Belongs to the class-I aminoacyl-tRNA synthetase family.

The protein localises to the cytoplasm. It catalyses the reaction tRNA(Leu) + L-leucine + ATP = L-leucyl-tRNA(Leu) + AMP + diphosphate. The sequence is that of Leucine--tRNA ligase from Ruegeria pomeroyi (strain ATCC 700808 / DSM 15171 / DSS-3) (Silicibacter pomeroyi).